A 414-amino-acid chain; its full sequence is MAATMVLDPKPSSTPPPTLPNPYTTDSQSTDSEDDLYTRLKTLDRQIEFIDIQEEYVKDELKNLKREQLRSQEEVKRIQSVPLVIGQFMEMIDQNNGIVGSTTGSNYYVRILSTINRELLKPSASVALHRHSNALVDVLPPEADSSISLLSQSEKPDVTYNDIGGCDIQKQEIREAVELPLTHHELYKQIGIDPPRGVLLYGPPGTGKTMLAKAVANHTTAAFIRVVGSEFVQKYLGEGPRMVRDVFRLAKENAPAIIFIDEVDAIATARFDAQTGADREVQRILMELLNQMDGFDQTVNVKVIMATNRADTLDPALLRPGRLDRKIEFPLPDRRQKRLVFQVCTAKMNLSDEVDLEDYVSRPDKISAAEITAICQEAGMHAVRKNRYVILPKDFEKGYRTNVKKPDTDFDFYK.

The tract at residues 1-33 (MAATMVLDPKPSSTPPPTLPNPYTTDSQSTDSE) is disordered. A compositionally biased stretch (low complexity) spans 21 to 30 (NPYTTDSQST). The stretch at 55–81 (EYVKDELKNLKREQLRSQEEVKRIQSV) forms a coiled coil. 202–209 (GPPGTGKT) lines the ATP pocket.

This sequence belongs to the AAA ATPase family.

The protein resides in the cytoplasm. Its subcellular location is the nucleus. Its function is as follows. The 26S proteasome is involved in the ATP-dependent degradation of ubiquitinated proteins. The regulatory (or ATPase) complex confers ATP dependency and substrate specificity to the 26S complex. The protein is 26S proteasome regulatory subunit 6B homolog of Helianthus annuus (Common sunflower).